The following is a 912-amino-acid chain: Protein translocase subunit SecA (912 aa).

ATP-binding positions include Gln87, 105–109 (GEGKT), and Asp508. Positions 865–912 (DEEAAQVQSGNAPLPVSQVTRDEPKVGRNDPCPCGSGKKYKHCHGQLS) are disordered. Positions 896, 898, 907, and 908 each coordinate Zn(2+). Over residues 902-912 (KKYKHCHGQLS) the composition is skewed to basic residues.

This sequence belongs to the SecA family. As to quaternary structure, monomer and homodimer. Part of the essential Sec protein translocation apparatus which comprises SecA, SecYEG and auxiliary proteins SecDF-YajC and YidC. The cofactor is Zn(2+).

Its subcellular location is the cell inner membrane. It localises to the cytoplasm. It catalyses the reaction ATP + H2O + cellular proteinSide 1 = ADP + phosphate + cellular proteinSide 2.. Part of the Sec protein translocase complex. Interacts with the SecYEG preprotein conducting channel. Has a central role in coupling the hydrolysis of ATP to the transfer of proteins into and across the cell membrane, serving both as a receptor for the preprotein-SecB complex and as an ATP-driven molecular motor driving the stepwise translocation of polypeptide chains across the membrane. This Xanthomonas oryzae pv. oryzae (strain PXO99A) protein is Protein translocase subunit SecA.